Here is an 86-residue protein sequence, read N- to C-terminus: MAHKKGGGSSRNGRDSESKRLGVKAYGDQFVSAGSIIVRQRGTKVHPGLNVGRGGDDTLFAKVDGRVRFGRSRGRSVVSVVREAPA.

Residues 1–21 (MAHKKGGGSSRNGRDSESKRL) are disordered.

The protein belongs to the bacterial ribosomal protein bL27 family.

This Rubrobacter xylanophilus (strain DSM 9941 / JCM 11954 / NBRC 16129 / PRD-1) protein is Large ribosomal subunit protein bL27.